Reading from the N-terminus, the 176-residue chain is Large ribosomal subunit protein uL10 (176 aa).

Belongs to the universal ribosomal protein uL10 family. In terms of assembly, part of the ribosomal stalk of the 50S ribosomal subunit. The N-terminus interacts with L11 and the large rRNA to form the base of the stalk. The C-terminus forms an elongated spine to which L12 dimers bind in a sequential fashion forming a multimeric L10(L12)X complex.

In terms of biological role, forms part of the ribosomal stalk, playing a central role in the interaction of the ribosome with GTP-bound translation factors. This is Large ribosomal subunit protein uL10 from Leuconostoc citreum (strain KM20).